The following is a 220-amino-acid chain: UPF0319 protein YccT (220 aa).

A signal peptide spans 1–20 (MKAGTLTLLIALCLPISVSA).

Belongs to the UPF0319 family.

The sequence is that of UPF0319 protein YccT from Escherichia fergusonii (strain ATCC 35469 / DSM 13698 / CCUG 18766 / IAM 14443 / JCM 21226 / LMG 7866 / NBRC 102419 / NCTC 12128 / CDC 0568-73).